A 145-amino-acid polypeptide reads, in one-letter code: 3-hydroxyacyl-[acyl-carrier-protein] dehydratase FabZ (145 aa).

H47 is an active-site residue.

This sequence belongs to the thioester dehydratase family. FabZ subfamily.

The protein localises to the cytoplasm. The catalysed reaction is a (3R)-hydroxyacyl-[ACP] = a (2E)-enoyl-[ACP] + H2O. Functionally, involved in unsaturated fatty acids biosynthesis. Catalyzes the dehydration of short chain beta-hydroxyacyl-ACPs and long chain saturated and unsaturated beta-hydroxyacyl-ACPs. This Chromohalobacter salexigens (strain ATCC BAA-138 / DSM 3043 / CIP 106854 / NCIMB 13768 / 1H11) protein is 3-hydroxyacyl-[acyl-carrier-protein] dehydratase FabZ.